The sequence spans 363 residues: Lovastatin nonaketide synthase, enoyl reductase component lovC (363 aa).

NADP(+)-binding positions include 51–54, 174–177, 197–200, tyrosine 215, 262–263, threonine 280, and 351–352; these read SDTK, STAT, SPHN, LN, and LS. A lovB-binding region spans residues 226–272; sequence TYTKNNLRYALDCITNVESTTFCFAAIGRAGGHYVSLNPFPEHAATR.

It belongs to the zinc-containing alcohol dehydrogenase family. As to quaternary structure, each MAT domain from the lovB homodimer binds one lovC molecule to form the final active lovB-lovC megasynthase complex.

It catalyses the reaction holo-[lovastatin nonaketide synthase] + 9 malonyl-CoA + S-adenosyl-L-methionine + 11 NADPH + 19 H(+) = dihydromonacolin L-[lovastatin nonaketide synthase] + S-adenosyl-L-homocysteine + 9 CO2 + 11 NADP(+) + 9 CoA + 6 H2O. It participates in polyketide biosynthesis; lovastatin biosynthesis. Functionally, trans-enoyl reductase; part of the gene cluster that mediates the biosynthesis of lovastatin (also known as mevinolin, mevacor or monacolin K), a hypolipidemic inhibitor of (3S)-hydroxymethylglutaryl-coenzyme A (HMG-CoA) reductase (HMGR). The first step in the biosynthesis of lovastatin is the production of dihydromonacolin L acid (DML) by the lovastatin nonaketide synthase lovB and the trans-acting enoyl reductase lovC (called the lovB-lovC megasynthase complex) via condensation of one acetyl-CoA unit and 8 malonyl-CoA units. The formation of the LovB/C complex is essential for the integrity of the catalytic chamber to the complete total synthesis of DML acid. Dihydromonacolin L acid is released from lovB by the thioesterase lovG. Next, dihydromonacolin L acid is oxidized by the dihydromonacolin L monooxygenase lovA twice to form monacolin J acid. The 2-methylbutyrate moiety of lovastatin is synthesized by the lovastatin diketide synthase lovF via condensation of one acetyl-CoA unit and one malonyl-CoA unit. Finally, the covalent attachment of this moiety to monacolin J acid is catalyzed by the transesterase lovD to yield lovastatin. LovD has broad substrate specificity and can also convert monacolin J to simvastatin using alpha-dimethylbutanoyl-S-methyl-3-mercaptopropionate (DMB-S-MMP) as the thioester acyl donor, and can also catalyze the reverse reaction and function as hydrolase in vitro. LovD has much higher activity with LovF-bound 2-methylbutanoate than with free diketide substrates. In Aspergillus terreus, this protein is Lovastatin nonaketide synthase, enoyl reductase component lovC.